The sequence spans 536 residues: Metal transporter Nramp2 (536 aa).

A disordered region spans residues 1–37 (MSSPSGGEDSKDDEKDEESNRLLPLSSSSQSQSLQSE). Residues 22 to 36 (LLPLSSSSQSQSLQS) are compositionally biased toward low complexity. Asn-38 is a glycosylation site (N-linked (GlcNAc...) asparagine). 12 consecutive transmembrane segments (helical) span residues 76-96 (LWLF…PGNL), 104-124 (AIAG…GLLI), 161-181 (VALI…IQIL), 185-205 (FLPL…FLFL), 213-233 (LEGV…WMCG), 259-279 (AVGV…SALV), 305-325 (VALF…AKGF), 347-367 (YGGG…AAGQ), 400-420 (SFAI…EASL), 435-455 (IPFA…MGVF), 465-485 (AWTI…DFFI), and 492-512 (LFGF…IYLV).

Belongs to the NRAMP (TC 2.A.55) family.

It is found in the membrane. Probable divalent metal transporter. The sequence is that of Metal transporter Nramp2 from Populus trichocarpa (Western balsam poplar).